A 240-amino-acid polypeptide reads, in one-letter code: UDP-2,3-diacylglucosamine hydrolase (240 aa).

Mn(2+)-binding residues include aspartate 8, histidine 10, aspartate 41, asparagine 79, and histidine 114. 79–80 (NR) is a binding site for substrate. Substrate contacts are provided by aspartate 122, serine 160, asparagine 164, lysine 167, and histidine 195. Mn(2+) contacts are provided by histidine 195 and histidine 197.

The protein belongs to the LpxH family. Mn(2+) serves as cofactor.

The protein resides in the cell inner membrane. It carries out the reaction UDP-2-N,3-O-bis[(3R)-3-hydroxytetradecanoyl]-alpha-D-glucosamine + H2O = 2-N,3-O-bis[(3R)-3-hydroxytetradecanoyl]-alpha-D-glucosaminyl 1-phosphate + UMP + 2 H(+). It participates in glycolipid biosynthesis; lipid IV(A) biosynthesis; lipid IV(A) from (3R)-3-hydroxytetradecanoyl-[acyl-carrier-protein] and UDP-N-acetyl-alpha-D-glucosamine: step 4/6. Hydrolyzes the pyrophosphate bond of UDP-2,3-diacylglucosamine to yield 2,3-diacylglucosamine 1-phosphate (lipid X) and UMP by catalyzing the attack of water at the alpha-P atom. Involved in the biosynthesis of lipid A, a phosphorylated glycolipid that anchors the lipopolysaccharide to the outer membrane of the cell. The sequence is that of UDP-2,3-diacylglucosamine hydrolase from Escherichia coli O81 (strain ED1a).